Here is a 264-residue protein sequence, read N- to C-terminus: Complement C1q tumor necrosis factor-related protein 6 (264 aa).

The N-terminal stretch at 1-24 is a signal peptide; sequence MRVIMGIASLGFLWAVFLLPLVFG. N-linked (GlcNAc...) asparagine glycosylation is present at Asn77. A disordered region spans residues 81–125; sequence LKGDKGDRGPTGTPGKPGKNGTRGDRGSQGVKGDKGQAGSPGSSC. Positions 83–124 constitute a Collagen-like domain; it reads GDKGDRGPTGTPGKPGKNGTRGDRGSQGVKGDKGQAGSPGSS. Residues 90–100 are compositionally biased toward low complexity; sequence PTGTPGKPGKN. The C1q domain occupies 125 to 264; it reads CQTHYSAFSV…SGHLIKAEDN (140 aa).

It localises to the secreted. The polypeptide is Complement C1q tumor necrosis factor-related protein 6 (C1qtnf6) (Mus musculus (Mouse)).